The sequence spans 308 residues: Formamidopyrimidine-DNA glycosylase (308 aa).

The active-site Schiff-base intermediate with DNA is the Pro-2. Residue Glu-3 is the Proton donor of the active site. Catalysis depends on Lys-61, which acts as the Proton donor; for beta-elimination activity. The DNA site is built by His-100, Arg-120, and Arg-181. Residues 267-301 (AVYGQEGRPCPRCGALVRRDAFMNRSSFSCPVCQP) form an FPG-type zinc finger. The Proton donor; for delta-elimination activity role is filled by Arg-291.

Belongs to the FPG family. In terms of assembly, monomer. Requires Zn(2+) as cofactor.

The enzyme catalyses Hydrolysis of DNA containing ring-opened 7-methylguanine residues, releasing 2,6-diamino-4-hydroxy-5-(N-methyl)formamidopyrimidine.. It carries out the reaction 2'-deoxyribonucleotide-(2'-deoxyribose 5'-phosphate)-2'-deoxyribonucleotide-DNA = a 3'-end 2'-deoxyribonucleotide-(2,3-dehydro-2,3-deoxyribose 5'-phosphate)-DNA + a 5'-end 5'-phospho-2'-deoxyribonucleoside-DNA + H(+). Its function is as follows. Involved in base excision repair of DNA damaged by oxidation or by mutagenic agents. Acts as a DNA glycosylase that recognizes and removes damaged bases. Has a preference for oxidized purines, such as 7,8-dihydro-8-oxoguanine (8-oxoG). Has AP (apurinic/apyrimidinic) lyase activity and introduces nicks in the DNA strand. Cleaves the DNA backbone by beta-delta elimination to generate a single-strand break at the site of the removed base with both 3'- and 5'-phosphates. This chain is Formamidopyrimidine-DNA glycosylase, found in Kineococcus radiotolerans (strain ATCC BAA-149 / DSM 14245 / SRS30216).